A 186-amino-acid polypeptide reads, in one-letter code: uncharacterized protein (186 aa).

Residues methionine 1–glycine 18 form the signal peptide. Cysteine 19 is lipidated: N-palmitoyl cysteine. Cysteine 19 carries S-diacylglycerol cysteine lipidation.

The protein localises to the cell membrane. This is an uncharacterized protein from Salmonella typhimurium (strain LT2 / SGSC1412 / ATCC 700720).